Here is a 229-residue protein sequence, read N- to C-terminus: Large ribosomal subunit protein uL1 (229 aa).

The protein belongs to the universal ribosomal protein uL1 family. Part of the 50S ribosomal subunit.

Binds directly to 23S rRNA. The L1 stalk is quite mobile in the ribosome, and is involved in E site tRNA release. Functionally, protein L1 is also a translational repressor protein, it controls the translation of the L11 operon by binding to its mRNA. This is Large ribosomal subunit protein uL1 from Rhodopseudomonas palustris (strain TIE-1).